The chain runs to 495 residues: DNA-directed RNA polymerase subunit alpha (495 aa).

The tract at residues 1–301 (MPYIKHIETK…RMLASLQAPP (301 aa)) is alpha N-terminal domain (alpha-NTD). Disordered stretches follow at residues 159-227 (SLVP…EAPH) and 391-495 (QEQV…PEET). The segment at 170 to 237 (PRDPLEPEND…IPSMRDDHMT (68 aa)) is insert. Positions 172–186 (DPLEPENDSKSETKS) are enriched in basic and acidic residues. 2 stretches are compositionally biased toward polar residues: residues 207 to 219 (VNAQ…SNST) and 391 to 403 (QEQV…SQIA). The alpha C-terminal domain (alpha-CTD) stretch occupies residues 317 to 495 (AKEIALTPIE…LSSSQNPEET (179 aa)). A compositionally biased stretch (basic and acidic residues) spans 417 to 426 (RPIDSKETRR). Residues 444-453 (RKSSKTKVKA) show a composition bias toward basic residues. Polar residues-rich tracts occupy residues 464 to 473 (KSANLQQAEE) and 486 to 495 (LSSSQNPEET).

This sequence belongs to the RNA polymerase alpha chain family. In plastids the minimal PEP RNA polymerase catalytic core is composed of four subunits: alpha, beta, beta', and beta''. When a (nuclear-encoded) sigma factor is associated with the core the holoenzyme is formed, which can initiate transcription.

The protein resides in the plastid. Its subcellular location is the chloroplast. The catalysed reaction is RNA(n) + a ribonucleoside 5'-triphosphate = RNA(n+1) + diphosphate. DNA-dependent RNA polymerase catalyzes the transcription of DNA into RNA using the four ribonucleoside triphosphates as substrates. This chain is DNA-directed RNA polymerase subunit alpha, found in Nephroselmis olivacea (Green alga).